Consider the following 500-residue polypeptide: MTEAKAAWNALRDTPATSLTELFTNEPDRLSRLSMEEAGILFDFSKTHLSAALIDRFAALAEASGFAARRDALFAGAAVNVTEDRAAEHPAERGQGAPDSVARARGFHARMRGMIDAIEAEVFGPIRHILHVGIGGSALGPDLLVDALGRDAGRYEVAVVSNVDGAALDAVFRRFDPQATLLVVASKTFTTTETMLNARSVLAWMEEDNVEDPYSRVIALTAAPEKAVEWGIDETRILPFSESVGGRYSLWSSIGFPVALALGWDAFEELLEGAAAMDRHFRLAPPSANIPLLAAFVDQYYSVLRGAETRAVFAYDERLRLLPSYLQQLEMESNGKGVKADGSPVDGPTAAITWGGVGTDAQHAVFQLLHQGTRLVPVEFVAAIEPDHVLDDAHHRTLLVNCFAQGAALMAGRDNGDPARAYPGDRPSTTILLDRLDPGRLGALIAFYEHRTFANAVLLGINPFDQFGVELGKEIARSIESEGTDRFDPSTRALIARALG.

Glu-332 serves as the catalytic Proton donor. Catalysis depends on residues His-363 and Lys-473.

Belongs to the GPI family.

It localises to the cytoplasm. The enzyme catalyses alpha-D-glucose 6-phosphate = beta-D-fructose 6-phosphate. Its pathway is carbohydrate biosynthesis; gluconeogenesis. It participates in carbohydrate degradation; glycolysis; D-glyceraldehyde 3-phosphate and glycerone phosphate from D-glucose: step 2/4. Its function is as follows. Catalyzes the reversible isomerization of glucose-6-phosphate to fructose-6-phosphate. The chain is Glucose-6-phosphate isomerase from Rhizorhabdus wittichii (strain DSM 6014 / CCUG 31198 / JCM 15750 / NBRC 105917 / EY 4224 / RW1) (Sphingomonas wittichii).